The chain runs to 429 residues: C4-dicarboxylate transport protein (429 aa).

Transmembrane regions (helical) follow at residues L3–L23, L44–M64, I76–V96, I142–F162, V184–M204, L222–A242, V326–V346, and I352–I372.

The protein belongs to the dicarboxylate/amino acid:cation symporter (DAACS) (TC 2.A.23) family.

It localises to the cell inner membrane. Responsible for the transport of dicarboxylates such as succinate, fumarate, and malate from the periplasm across the membrane. In Serratia proteamaculans (strain 568), this protein is C4-dicarboxylate transport protein.